We begin with the raw amino-acid sequence, 243 residues long: rRNA adenine N-6-methyltransferase (243 aa).

Positions 11, 13, 38, 59, 84, and 101 each coordinate S-adenosyl-L-methionine.

This sequence belongs to the class I-like SAM-binding methyltransferase superfamily. rRNA adenine N(6)-methyltransferase family.

It carries out the reaction adenosine(2085) in 23S rRNA + 2 S-adenosyl-L-methionine = N(6)-dimethyladenosine(2085) in 23S rRNA + 2 S-adenosyl-L-homocysteine + 2 H(+). Its function is as follows. This protein produces a dimethylation of the adenine residue at position 2085 in 23S rRNA, resulting in reduced affinity between ribosomes and macrolide-lincosamide-streptogramin B antibiotics. This chain is rRNA adenine N-6-methyltransferase (ermA1), found in Staphylococcus aureus (strain Mu50 / ATCC 700699).